The following is an 862-amino-acid chain: Protein translocase subunit SecA (862 aa).

Residues Gln-88, 106–110, and Asp-506 contribute to the ATP site; that span reads GEGKT. Residues Cys-839, Cys-841, Cys-850, and His-851 each coordinate Zn(2+).

Belongs to the SecA family. Monomer and homodimer. Part of the essential Sec protein translocation apparatus which comprises SecA, SecYEG and auxiliary proteins SecDF-YajC and YidC. Requires Zn(2+) as cofactor.

The protein resides in the cell inner membrane. It is found in the cytoplasm. The catalysed reaction is ATP + H2O + cellular proteinSide 1 = ADP + phosphate + cellular proteinSide 2.. Part of the Sec protein translocase complex. Interacts with the SecYEG preprotein conducting channel. Has a central role in coupling the hydrolysis of ATP to the transfer of proteins into and across the cell membrane, serving as an ATP-driven molecular motor driving the stepwise translocation of polypeptide chains across the membrane. The chain is Protein translocase subunit SecA from Campylobacter jejuni subsp. doylei (strain ATCC BAA-1458 / RM4099 / 269.97).